Reading from the N-terminus, the 1628-residue chain is Lysine-specific histone demethylase 1 homolog 3 (1628 aa).

Positions 1 to 71 (MDGKEKKSGS…KKLSALGKDS (71 aa)) are disordered. Over residues 19–28 (FDDDADDDEP) the composition is skewed to acidic residues. The segment covering 43-64 (KDKVETESTGKQRQKQVVEKKL) has biased composition (basic and acidic residues). An SWIRM domain is found at 378-478 (GRAAAVTAGL…AGISSVNGKA (101 aa)). E647, R649, R655, and E1077 together coordinate FAD. The tract at residues 1271 to 1317 (SGKKSLRQANTTNTSRIRRKLNSPDTDSKGKLSNGNDVKTDEEFEDN) is disordered.

Belongs to the flavin monoamine oxidase family. FAD is required as a cofactor.

In terms of biological role, probable histone demethylase that reduces the levels of histone H3 'Lys-4' methylation in chromatin. This Arabidopsis thaliana (Mouse-ear cress) protein is Lysine-specific histone demethylase 1 homolog 3 (LDL3).